A 239-amino-acid chain; its full sequence is Phosphoribosylaminoimidazole-succinocarboxamide synthase (239 aa).

The protein belongs to the SAICAR synthetase family.

It catalyses the reaction 5-amino-1-(5-phospho-D-ribosyl)imidazole-4-carboxylate + L-aspartate + ATP = (2S)-2-[5-amino-1-(5-phospho-beta-D-ribosyl)imidazole-4-carboxamido]succinate + ADP + phosphate + 2 H(+). It participates in purine metabolism; IMP biosynthesis via de novo pathway; 5-amino-1-(5-phospho-D-ribosyl)imidazole-4-carboxamide from 5-amino-1-(5-phospho-D-ribosyl)imidazole-4-carboxylate: step 1/2. This chain is Phosphoribosylaminoimidazole-succinocarboxamide synthase, found in Bacillus cytotoxicus (strain DSM 22905 / CIP 110041 / 391-98 / NVH 391-98).